The following is a 512-amino-acid chain: Glutathione-binding protein GsiB (512 aa).

The signal sequence occupies residues methionine 1–alanine 26.

The protein belongs to the bacterial solute-binding protein 5 family. The complex is composed of two ATP-binding proteins (GsiA), two transmembrane proteins (GsiC and GsiD) and a solute-binding protein (GsiB).

The protein resides in the periplasm. Functionally, part of the ABC transporter complex GsiABCD involved in glutathione import. Binds glutathione. The chain is Glutathione-binding protein GsiB from Escherichia coli O157:H7.